Consider the following 157-residue polypeptide: Transcriptional repressor NrdR (157 aa).

Residues 1-21 (MKCPNCHKNGSRVVDSRPADN) form a disordered region. Residues 3-34 (CPNCHKNGSRVVDSRPADNGHAIRRRRECEQC) fold into a zinc finger. An ATP-cone domain is found at 49-139 (LLVIKKNGTR…VYREFKDMHA (91 aa)).

This sequence belongs to the NrdR family. Zn(2+) is required as a cofactor.

In terms of biological role, negatively regulates transcription of bacterial ribonucleotide reductase nrd genes and operons by binding to NrdR-boxes. The protein is Transcriptional repressor NrdR of Ligilactobacillus salivarius (strain UCC118) (Lactobacillus salivarius).